A 179-amino-acid polypeptide reads, in one-letter code: Probable phosphopantothenoylcysteine decarboxylase (179 aa).

Asparagine 124 contributes to the substrate binding site. The Proton donor role is filled by cysteine 157.

The protein belongs to the HFCD (homooligomeric flavin containing Cys decarboxylase) superfamily. FMN is required as a cofactor.

It carries out the reaction N-[(R)-4-phosphopantothenoyl]-L-cysteine + H(+) = (R)-4'-phosphopantetheine + CO2. It participates in cofactor biosynthesis; coenzyme A biosynthesis; CoA from (R)-pantothenate: step 3/5. Its function is as follows. Catalyzes the decarboxylation of 4'-phosphopantothenoylcysteine to 4'-phosphopantetheine. The polypeptide is Probable phosphopantothenoylcysteine decarboxylase (coaC) (Streptococcus mutans serotype c (strain ATCC 700610 / UA159)).